A 178-amino-acid chain; its full sequence is Protein GrpE (178 aa).

The protein belongs to the GrpE family. As to quaternary structure, homodimer.

Its subcellular location is the cytoplasm. Its function is as follows. Participates actively in the response to hyperosmotic and heat shock by preventing the aggregation of stress-denatured proteins, in association with DnaK and GrpE. It is the nucleotide exchange factor for DnaK and may function as a thermosensor. Unfolded proteins bind initially to DnaJ; upon interaction with the DnaJ-bound protein, DnaK hydrolyzes its bound ATP, resulting in the formation of a stable complex. GrpE releases ADP from DnaK; ATP binding to DnaK triggers the release of the substrate protein, thus completing the reaction cycle. Several rounds of ATP-dependent interactions between DnaJ, DnaK and GrpE are required for fully efficient folding. This is Protein GrpE from Rickettsia prowazekii (strain Madrid E).